A 326-amino-acid polypeptide reads, in one-letter code: Probable pectate lyase B (326 aa).

The N-terminal stretch at 1-15 is a signal peptide; sequence MRVTAILTLATIAIA. Residues Asp-133, Asp-162, and Asp-166 each coordinate Ca(2+). The active site involves Arg-219.

It belongs to the polysaccharide lyase 1 family. Requires Ca(2+) as cofactor.

It localises to the secreted. The enzyme catalyses Eliminative cleavage of (1-&gt;4)-alpha-D-galacturonan to give oligosaccharides with 4-deoxy-alpha-D-galact-4-enuronosyl groups at their non-reducing ends.. Pectinolytic enzyme consist of four classes of enzymes: pectin lyase, polygalacturonase, pectin methylesterase and rhamnogalacturonase. Among pectinolytic enzymes, pectin lyase is the most important in depolymerization of pectin, since it cleaves internal glycosidic bonds of highly methylated pectins. Favors pectate, the anion, over pectin, the methyl ester. The sequence is that of Probable pectate lyase B (plyB) from Aspergillus flavus (strain ATCC 200026 / FGSC A1120 / IAM 13836 / NRRL 3357 / JCM 12722 / SRRC 167).